An 84-amino-acid polypeptide reads, in one-letter code: MERTLRKKRTGRVVSDKMDKTVVVAVETKVRHPLYGKTINKTTKFKVHDEKNEAKINDRVLIMETRPLSKDKRWRLVEIVEKAK.

It belongs to the universal ribosomal protein uS17 family. As to quaternary structure, part of the 30S ribosomal subunit.

In terms of biological role, one of the primary rRNA binding proteins, it binds specifically to the 5'-end of 16S ribosomal RNA. The chain is Small ribosomal subunit protein uS17 from Clostridium botulinum (strain Alaska E43 / Type E3).